Here is a 379-residue protein sequence, read N- to C-terminus: Homoserine O-succinyltransferase (379 aa).

The AB hydrolase-1 domain maps to 51-360; sequence NAVLICHALS…DAPQGHDAFL (310 aa). Serine 157 serves as the catalytic Nucleophile. Residue arginine 227 coordinates substrate. Residues aspartate 323 and histidine 356 contribute to the active site. A substrate-binding site is contributed by aspartate 357.

The protein belongs to the AB hydrolase superfamily. MetX family. As to quaternary structure, homodimer.

Its subcellular location is the cytoplasm. It carries out the reaction L-homoserine + succinyl-CoA = O-succinyl-L-homoserine + CoA. The protein operates within amino-acid biosynthesis; L-methionine biosynthesis via de novo pathway; O-succinyl-L-homoserine from L-homoserine: step 1/1. In terms of biological role, transfers a succinyl group from succinyl-CoA to L-homoserine, forming succinyl-L-homoserine. This is Homoserine O-succinyltransferase from Pseudomonas aeruginosa (strain UCBPP-PA14).